A 614-amino-acid chain; its full sequence is Autophagy-related protein 22-1 (614 aa).

A disordered region spans residues 1 to 29 (MQNCTNSPEDQAASVCPPPPQFPGDDTRP). Asn3 carries an N-linked (GlcNAc...) asparagine glycan. The next 4 helical transmembrane spans lie at 41–61 (YGWA…PITL), 126–146 (TASF…ILII), 160–180 (MLLV…LAVV), and 185–205 (LLGG…FVLL). The interval 229-254 (PTGTSHDSTSTADGPGQTDGTETTSL) is disordered. Over residues 230 to 254 (TGTSHDSTSTADGPGQTDGTETTSL) the composition is skewed to polar residues. The next 8 helical transmembrane spans lie at 291-311 (GIGI…LVVV), 322-342 (LVLF…AMWL), 383-403 (ILLF…VSGT), 417-437 (AALG…AFSW), 452-472 (IVAC…GFIP), 486-506 (WEMY…SSYC), 523-545 (YALY…GIIT), and 554-574 (AFVF…LVDV).

This sequence belongs to the ATG22 family.

The protein localises to the vacuole membrane. Its function is as follows. Vacuolar effluxer which mediate the efflux of amino acids resulting from autophagic degradation. The release of autophagic amino acids allows the maintenance of protein synthesis and viability during nitrogen starvation. The sequence is that of Autophagy-related protein 22-1 (atg22-1) from Aspergillus niger (strain ATCC MYA-4892 / CBS 513.88 / FGSC A1513).